The primary structure comprises 297 residues: uncharacterized protein (297 aa).

Residues 1-12 show a composition bias toward polar residues; that stretch reads MASYSFQFSTDA. Residues 1-21 form a disordered region; the sequence is MASYSFQFSTDATGKPGAAKP.

This sequence to B.subtilis XkdY/XepA.

This is an uncharacterized protein from Bacillus subtilis (strain 168).